A 185-amino-acid chain; its full sequence is Lysine-rich arabinogalactan protein 17 (185 aa).

A signal peptide spans 1-21 (MTRNILLTVTLICIVFITVGG). The segment at 25–160 (ATAPIHSPST…FSPAADDQSG (136 aa)) is disordered. The segment covering 43–68 (SPAISPAAPTPESTEAPAKTPVEAPV) has biased composition (low complexity). Residues 69-88 (EAPPSPTPASTPQISPPAPS) show a composition bias toward pro residues. Residues 111 to 122 (TKHKKKTKKHKT) are compositionally biased toward basic residues. Pro residues predominate over residues 135 to 146 (PPAPPGEAPGPG). Ser-159 is lipidated: GPI-anchor amidated serine. Residues 160 to 185 (GAQRISVVIQMVGAAAIAWSLLVLAF) constitute a propeptide, removed in mature form.

Belongs to the lysine-rich AGP family. Post-translationally, O-glycosylated on the hydroxyproline residues. Predominantly expressed in open flowers. Also expressed in leaves and stems, and at a lower level in roots.

It localises to the cell membrane. In terms of biological role, proteoglycan that seems to be implicated in diverse developmental roles such as differentiation, cell-cell recognition, embryogenesis and programmed cell death. The polypeptide is Lysine-rich arabinogalactan protein 17 (AGP17) (Arabidopsis thaliana (Mouse-ear cress)).